We begin with the raw amino-acid sequence, 576 residues long: Probable proline--tRNA ligase, mitochondrial (576 aa).

The protein belongs to the class-II aminoacyl-tRNA synthetase family.

The protein localises to the mitochondrion. The catalysed reaction is tRNA(Pro) + L-proline + ATP = L-prolyl-tRNA(Pro) + AMP + diphosphate. This Saccharomyces cerevisiae (strain ATCC 204508 / S288c) (Baker's yeast) protein is Probable proline--tRNA ligase, mitochondrial (AIM10).